The chain runs to 479 residues: Ribulose bisphosphate carboxylase large chain (479 aa).

Residues 1–2 (MS) constitute a propeptide that is removed on maturation. N-acetylproline is present on Pro-3. Substrate-binding positions include Thr-65, Asn-123, 173 to 177 (TIKPK), and 201 to 204 (KDDE). Residue Lys-175 is the Proton acceptor of the active site. Mg(2+) is bound by residues Lys-201, Asp-203, and Glu-204. Lys-201 carries the N6-carboxylysine modification. The residue at position 208 (Ser-208) is a Phosphoserine. His-294 (proton acceptor) is an active-site residue. Substrate-binding positions include 294–295 (HR) and His-327. The residue at position 330 (Thr-330) is a Phosphothreonine. Residues Lys-334 and 379–381 (SGG) each bind substrate.

It belongs to the RuBisCO large chain family. Type I subfamily. As to quaternary structure, heterohexadecamer of 8 large chains and 8 small chains; disulfide-linked. The disulfide link is formed within the large subunit homodimers. Interacts with RBCX1 and RBCX1. An intermediate complex made of eight RbcL subunits interacts with the chaperone BSD2. The cofactor is Mg(2+). The disulfide bond which can form in the large chain dimeric partners within the hexadecamer appears to be associated with oxidative stress and protein turnover.

The protein localises to the plastid. Its subcellular location is the chloroplast. The enzyme catalyses 2 (2R)-3-phosphoglycerate + 2 H(+) = D-ribulose 1,5-bisphosphate + CO2 + H2O. It carries out the reaction D-ribulose 1,5-bisphosphate + O2 = 2-phosphoglycolate + (2R)-3-phosphoglycerate + 2 H(+). In terms of biological role, ruBisCO catalyzes two reactions: the carboxylation of D-ribulose 1,5-bisphosphate, the primary event in carbon dioxide fixation, as well as the oxidative fragmentation of the pentose substrate in the photorespiration process. Both reactions occur simultaneously and in competition at the same active site. Binds to abscisic acid (ABA). In Arabidopsis thaliana (Mouse-ear cress), this protein is Ribulose bisphosphate carboxylase large chain.